The primary structure comprises 915 residues: Clathrin coat assembly protein AP180 (915 aa).

The region spanning 14–145 (QYSVTGSAVA…FSYRQMAFDF (132 aa)) is the ENTH domain. Disordered stretches follow at residues 285-326 (LEGK…DTSP), 391-425 (SVPS…ATTA), and 497-522 (PETS…PSPA). 3 positions are modified to phosphoserine: serine 296, serine 300, and serine 306. A compositionally biased stretch (polar residues) spans 302-324 (LSKSSPATTVTSPNSTPAKTIDT). Threonine 310 is a glycosylation site (O-linked (GlcNAc) threonine). Serine 313 is modified (phosphoserine). A Phosphothreonine modification is found at threonine 317. Low complexity-rich tracts occupy residues 410 to 425 (TTTT…ATTA) and 500 to 511 (SAPVVTPTASTA). Positions 512–522 (PPVPATAPSPA) are enriched in pro residues. A phosphoserine mark is found at serine 594, serine 600, proline 627, serine 640, and serine 646. Residues 720 to 735 (TTPSTSSSSSFDPSGD) are compositionally biased toward low complexity. A disordered region spans residues 720–765 (TTPSTSSSSSFDPSGDLLMPTMAPSGQPAPVSMVPPSPAMSASKGL). A Phosphoserine modification is found at serine 775. Residues 817–855 (SAGVPPQGTVPPTSSVPPGAGAPSVGQPGAGYGMPPAGT) form a disordered region. Arginine 873 carries the asymmetric dimethylarginine; alternate modification. Position 873 is an omega-N-methylarginine; alternate (arginine 873). The interval 875–915 (PFGAAAVPGTQLSPSPTPATQSPKKPPAKDPLADLNIKDFL) is disordered. Residues 884–896 (TQLSPSPTPATQS) show a composition bias toward polar residues. Over residues 901 to 915 (PAKDPLADLNIKDFL) the composition is skewed to basic and acidic residues.

This sequence belongs to the PICALM/SNAP91 family. Binds AP2A2. Interacts with AP2B1; clathrin competes with SNAP91. Post-translationally, thr-310 can be modified by the addition of N-acetylglucosamine which can be further phosphorylated. The form with phosphorylated O-linked N-acetylglucosamine is predominant in brain synaptosomes. There is no evidence for direct Thr-310 phosphorylation.

The protein resides in the cell membrane. The protein localises to the membrane. It localises to the coated pit. Functionally, adaptins are components of the adapter complexes which link clathrin to receptors in coated vesicles. Clathrin-associated protein complexes are believed to interact with the cytoplasmic tails of membrane proteins, leading to their selection and concentration. Binding of AP180 to clathrin triskelia induces their assembly into 60-70 nm coats. The chain is Clathrin coat assembly protein AP180 (Snap91) from Rattus norvegicus (Rat).